The sequence spans 152 residues: UPF0225 protein YchJ (152 aa).

The protein belongs to the UPF0225 family.

In Shigella dysenteriae serotype 1 (strain Sd197), this protein is UPF0225 protein YchJ.